The following is a 662-amino-acid chain: Interferon-induced GTP-binding protein Mx1 (662 aa).

N-acetylmethionine; in Interferon-induced GTP-binding protein Mx1; alternate is present on M1. Positions D67–P340 constitute a Dynamin-type G domain. The tract at residues G77–S84 is G1 motif. G77–S84 is a GTP binding site. Residues V102–R104 form a G2 motif region. The interval D178–G181 is G3 motif. GTP contacts are provided by residues D178–I182 and T247–D250. Positions T247–D250 are G4 motif. Residues K279–G282 form a G5 motif region. The tract at residues L341–E366 is bundle signaling element (BSE). Residues E366–C533 are middle domain. The interval D367–E632 is stalk. The segment at K554–K557 is critical for lipid-binding. Residues M574–G662 enclose the GED domain.

The protein belongs to the TRAFAC class dynamin-like GTPase superfamily. Dynamin/Fzo/YdjA family. As to quaternary structure, homotetramer. Oligomerizes into multimeric filamentous or ring-like structures by virtue of its stalk domain. Oligomerization is critical for GTPase activity, protein stability, and recognition of viral target structures. Interacts with TRPC1, TRPC3, TRPC4, TRPC5, TRPC6 and TRPC7. Interacts with HSPA5. Interacts with DDX39A and DDX39B. Interacts with TUBB/TUBB5. The GTP-bound form interacts (via C-terminus) with THOV P5 protein. The GTP-bound form interacts with LACV protein N. Interacts with CCHFV protein N. In terms of processing, ISGylated.

It is found in the cytoplasm. It localises to the endoplasmic reticulum membrane. The protein localises to the perinuclear region. Its subcellular location is the nucleus. Functionally, interferon-induced dynamin-like GTPase with antiviral activity against a wide range of RNA viruses and some DNA viruses. Its target viruses include negative-stranded RNA viruses and HBV through binding and inactivation of their ribonucleocapsid. May also antagonize reoviridae and asfarviridae replication. Inhibits thogoto virus (THOV) replication by preventing the nuclear import of viral nucleocapsids. Inhibits La Crosse virus (LACV) replication by sequestering viral nucleoprotein in perinuclear complexes, preventing genome amplification, budding, and egress. Inhibits influenza A virus (IAV) replication by decreasing or delaying NP synthesis and by blocking endocytic traffic of incoming virus particles. Enhances ER stress-mediated cell death after influenza virus infection. May regulate the calcium channel activity of TRPCs. The polypeptide is Interferon-induced GTP-binding protein Mx1 (MX1) (Homo sapiens (Human)).